The sequence spans 664 residues: MAPTTPLLELVDVHRTYPVGESTVNALRGVSLEIREGEFVAIMGSSGSGKSSLLHILGLLDNPDRGEYRILGRNVNALPEDGQAGLRNHVAGFVFQQFHLLKRMSIVDNVRLPHIYSGLKGDFRHEALESLKKVGLMHRLDHTPGQLSGGEQQRVAIARALIGNPMILFADEPTGNLDSRNSLEIMKILEELHREGRTIVMVTHEDEIAAYADRVITMRDGLVVSDQRRDRVCLPAGPSVPLTLDPHAMMDASRNLSVWQDGRFIGFVQQAFQSIFANKVRSLLSVLGILVGVASVIAMMALGEGAKVSIEEELKSMGSNLISVRGGSARVRGAAQGDGAVARFTFKDVKDISRMHSLVKGAAGTVNGSGQIVFGNRNWSTTLDGVGYEYGSMRAFVPSIGRWFTRDEIRKREKVAVIGVTVARELFGNNNPIGHTVKINRINFKVIGIAPAKGFSTHRDQDDVVLVPVTTAMYRVLGRDYLNSIYVEVRSAEGIDGAKEAVSDLIVKNHRLREGDDSFNIRDMTEIQEMLSSTTRTMSMLLGAIAAISLLVGGIGIMNIMLVSVTERTREIGLRKAIGARREDIMLQFLVESVGLTLSGGIIGIIAGIGISALLAVFAGWAVKTSIVSIVLATFFSAITGIFFGLWPARKAAELRPVEALRYE.

Positions 8–245 (LELVDVHRTY…AGPSVPLTLD (238 aa)) constitute an ABC transporter domain. Residue 44–51 (GSSGSGKS) participates in ATP binding. A run of 4 helical transmembrane segments spans residues 283–303 (LLSV…MALG), 543–563 (GAIA…IMLV), 602–622 (IIGI…AGWA), and 627–647 (IVSI…FGLW).

It belongs to the ABC transporter superfamily. Macrolide exporter (TC 3.A.1.122) family. In terms of assembly, homodimer.

It is found in the cell inner membrane. In terms of biological role, non-canonical ABC transporter that contains transmembrane domains (TMD), which form a pore in the inner membrane, and an ATP-binding domain (NBD), which is responsible for energy generation. Confers resistance against macrolides. The polypeptide is Macrolide export ATP-binding/permease protein MacB (Chlorobium luteolum (strain DSM 273 / BCRC 81028 / 2530) (Pelodictyon luteolum)).